We begin with the raw amino-acid sequence, 205 residues long: uncharacterized protein (205 aa).

Polar residues predominate over residues 1 to 25 (MSNNNNEAQQPVESTNVESQQNVVQ). The tract at residues 1–205 (MSNNNNEAQQ…TSDPAQQVEA (205 aa)) is disordered. Residues 32 to 79 (NENNDNNNNNNNNNNNNNNNNNNNNNNNNSNNNNNSSNNENNENNENN) show a composition bias toward low complexity. Residues 80–122 (SCEKSEQEKPKEPEEPVQEEKSKEPCDQQKVKENEPAEEKETE) show a composition bias toward basic and acidic residues. 2 stretches are compositionally biased toward low complexity: residues 123 to 132 (PAAPVEPENP) and 146 to 162 (QHQQQNHEPQQTSNGES). Basic and acidic residues predominate over residues 170–185 (SENKKRSIDEAGDIKD). The span at 194 to 205 (VETSDPAQQVEA) shows a compositional bias: polar residues.

This is an uncharacterized protein from Dictyostelium discoideum (Social amoeba).